The chain runs to 478 residues: MEKNLSSRDDDALHSLSAPSSSYNSIYDLLHYHERGNGLTINGKPSYSIEDAGDQITRDNVSWNGANVFGKSANLTFKFLQSARSTPDGDTGFVKFNAAQISQAKLALQSWADVANVTFTEVTGNQSANVTFGNYTRDSSGRLDYGTQAYAYLPGSGSASGTTWYNYNVDNIRSPDTMEYGRQTLTHEIGHALGLNHPGDYNAGEGNPSYSDVTYAEDTRQFSIMSYWSEKNTGGDFKGHYAAGPMLDDIAAIQRLYGANMTTRTGDSVYGFNSNTDRDFYTATSSSKALIFSAWDAGGNDTFDFSGYSNNQRINLNDGSLSDVGGLKGNVSIAEGVTIENAIGGSGNDLLIGNNADNTLRGGAGDDVLFGGSGADRLYGGSGRDTFVYTAASDSKVAAPDWLLDFQTGADKIDLSALNTGNNLHFVNQFSGSGGEIMLNWDASANTSNLYLNLDNNTSPEFLVKIVGQVSQTADFVV.

The propeptide occupies 1–17; it reads MEKNLSSRDDDALHSLS. Histidine 187 lines the Zn(2+) pocket. Glutamate 188 is a catalytic residue. 2 residues coordinate Zn(2+): histidine 191 and tyrosine 227. Positions 264, 266, 296, 298, 299, 301, 338, 340, 345, 347, 349, 354, 356, 358, 362, 363, 364, 365, 367, 371, 372, 374, 376, 380, 381, 383, 385, 394, 401, and 411 each coordinate Ca(2+). Hemolysin-type calcium-binding repeat units follow at residues 343-360 and 361-378; these read IGGS…DNTL and RGGA…ADRL.

This sequence belongs to the peptidase M10B family. Requires Ca(2+) as cofactor. Zn(2+) serves as cofactor.

It localises to the secreted. It carries out the reaction Preferential cleavage of bonds with hydrophobic residues in P1'.. The sequence is that of Serralysin C (prtC) from Dickeya chrysanthemi (Pectobacterium chrysanthemi).